A 124-amino-acid chain; its full sequence is Fluoride-specific ion channel FluC (124 aa).

The next 4 helical transmembrane spans lie at 1-21 (MFNL…RHLT), 35-55 (WGTM…IAIL), 66-86 (LFVA…SLDF), and 99-119 (FGYA…GLWL). 2 residues coordinate Na(+): Gly-74 and Thr-77.

It belongs to the fluoride channel Fluc/FEX (TC 1.A.43) family.

The protein localises to the cell inner membrane. The enzyme catalyses fluoride(in) = fluoride(out). Na(+) is not transported, but it plays an essential structural role and its presence is essential for fluoride channel function. Its function is as follows. Fluoride-specific ion channel. Important for reducing fluoride concentration in the cell, thus reducing its toxicity. The chain is Fluoride-specific ion channel FluC from Mesorhizobium japonicum (strain LMG 29417 / CECT 9101 / MAFF 303099) (Mesorhizobium loti (strain MAFF 303099)).